Consider the following 369-residue polypeptide: Putative agmatine deiminase (369 aa).

The active-site Amidino-cysteine intermediate is the C355.

This sequence belongs to the agmatine deiminase family.

It carries out the reaction agmatine + H2O = N-carbamoylputrescine + NH4(+). The protein is Putative agmatine deiminase of Marinomonas sp. (strain MWYL1).